Reading from the N-terminus, the 137-residue chain is Small ribosomal subunit protein uS9 (137 aa).

A disordered region spans residues Lys-118–Arg-137.

The protein belongs to the universal ribosomal protein uS9 family.

This chain is Small ribosomal subunit protein uS9, found in Acaryochloris marina (strain MBIC 11017).